The primary structure comprises 439 residues: Glucose-1-phosphate adenylyltransferase (439 aa).

Alpha-D-glucose 1-phosphate-binding positions include tyrosine 122, glycine 187, 202-203 (EK), and serine 220.

It belongs to the bacterial/plant glucose-1-phosphate adenylyltransferase family. In terms of assembly, homotetramer.

The enzyme catalyses alpha-D-glucose 1-phosphate + ATP + H(+) = ADP-alpha-D-glucose + diphosphate. It functions in the pathway glycan biosynthesis; glycogen biosynthesis. Functionally, involved in the biosynthesis of ADP-glucose, a building block required for the elongation reactions to produce glycogen. Catalyzes the reaction between ATP and alpha-D-glucose 1-phosphate (G1P) to produce pyrophosphate and ADP-Glc. In Thiobacillus denitrificans (strain ATCC 25259 / T1), this protein is Glucose-1-phosphate adenylyltransferase.